The chain runs to 207 residues: Shikimate kinase (207 aa).

32-37 (GVGKST) is a binding site for ATP. Residue S36 participates in Mg(2+) binding. 3 residues coordinate substrate: D54, R78, and G100. Residue R138 coordinates ATP. R157 is a substrate binding site.

The protein belongs to the shikimate kinase family. Monomer. Mg(2+) is required as a cofactor.

It is found in the cytoplasm. It carries out the reaction shikimate + ATP = 3-phosphoshikimate + ADP + H(+). It functions in the pathway metabolic intermediate biosynthesis; chorismate biosynthesis; chorismate from D-erythrose 4-phosphate and phosphoenolpyruvate: step 5/7. In terms of biological role, catalyzes the specific phosphorylation of the 3-hydroxyl group of shikimic acid using ATP as a cosubstrate. The sequence is that of Shikimate kinase from Bradyrhizobium diazoefficiens (strain JCM 10833 / BCRC 13528 / IAM 13628 / NBRC 14792 / USDA 110).